The primary structure comprises 870 residues: Lysosomal cholesterol signaling protein (870 aa).

The Lumenal portion of the chain corresponds to 1 to 38 (MNSNLPAENLTIAVNMTKTLPTAVTHGFNSTNDPPSMS). Residues 1-370 (MNSNLPAENL…SAWLLTFPTM (370 aa)) are PIN-like transporter. Asn-9, Asn-15, and Asn-29 each carry an N-linked (GlcNAc...) asparagine glycan. A helical transmembrane segment spans residues 39 to 59 (ITRLFPALLECFGIVLCGYIA). Cholesterol is bound by residues Phe-43 and Tyr-57. At 60 to 79 (GRANVITSTQAKGLGNFVSR) the chain is on the cytoplasmic side. Residues 80-100 (FALPALLFKNMVVLNFSNVDW) traverse the membrane as a helical segment. Residues 101-104 (SFLY) lie on the Lumenal side of the membrane. Residues 105–125 (SILIAKASVFFIVCVLTLLVA) form a helical membrane-spanning segment. Residues 126–133 (SPDSRFSK) are Cytoplasmic-facing. A discontinuously helical membrane pass occupies residues 134-154 (AGLFPIFATQSNDFALGYPIV). The Lumenal portion of the chain corresponds to 155 to 167 (EALYQTTYPEYLQ). A helical transmembrane segment spans residues 168–188 (YIYLVAPISLMMLNPIGFIFC). At 189–213 (EIQKWKDTQNASQNKIKIVGLGLLR) the chain is on the cytoplasmic side. A discontinuously helical transmembrane segment spans residues 214 to 234 (VLQNPIVFMVFIGIAFNFILD). At 235 to 243 (RKVPVYVEN) the chain is on the lumenal side. A discontinuously helical membrane pass occupies residues 244 to 264 (FLDGLGNSFSGSALFYLGLTM). Residues 265–273 (VGKIKRLKK) lie on the Cytoplasmic side of the membrane. Cholesterol is bound by residues Gly-266, Lys-267, and Ile-268. Residues 274–294 (SAFVVLILLITAKLLVLPLLC) traverse the membrane as a helical segment. At 295–315 (REMVELLDKGDSVVNHTSLSN) the chain is on the lumenal side. An N-linked (GlcNAc...) asparagine glycan is attached at Asn-309. Residues 316-336 (YAFLYGVFPVAPGVAIFATQF) form a discontinuously helical membrane-spanning segment. At 337-346 (NMEVEIITSG) the chain is on the cytoplasmic side. A helical transmembrane segment spans residues 347 to 367 (MVISTFVSAPIMYVSAWLLTF). Topologically, residues 368-381 (PTMDPKPLAYAIQN) are lumenal. Residues 380–717 (QNVSFDISIV…FGIFGLDKHL (338 aa)) are GPCR. A glycan (N-linked (GlcNAc...) asparagine) is linked at Asn-381. Residues 382 to 402 (VSFDISIVSLISLIWSLAILL) traverse the membrane as a helical segment. Residues 403-414 (LSKKYKQLPHML) lie on the Cytoplasmic side of the membrane. A helical transmembrane segment spans residues 415–435 (TTNLLIAQSIVCAGMMIWNFV). Over 436 to 438 (KEK) the chain is Lumenal. A helical transmembrane segment spans residues 439–459 (NFVGQILVFVLLYSSLYSTYL). The Cytoplasmic portion of the chain corresponds to 460-480 (WTGLLAISLFLLKKRERVQIP). Residues 481 to 501 (VGIIIISGWGIPALLVGVLLI) form a helical membrane-spanning segment. The Lumenal segment spans residues 502–520 (TGKHNGDSIDSAFFYGKEQ). Residues 521 to 541 (MITTAVTLFCSILIAGISLMC) form a helical membrane-spanning segment. Topologically, residues 542-660 (MNQTAQAGSY…GDQQLTRHVL (119 aa)) are cytoplasmic. Position 657 (Arg-657) interacts with cholesterol. Residues 661 to 681 (LCLLLIIGLFANLSSCLWWLF) form a helical membrane-spanning segment. Residues 682 to 691 (NQEPGRLYVE) lie on the Lumenal side of the membrane. A helical membrane pass occupies residues 692–712 (LQFFCAVFNFGQGFISFGIFG). Topologically, residues 713–870 (LDKHLIILPF…SSPPSHSPKT (158 aa)) are cytoplasmic. The region spanning 757 to 835 (YHRDLCIRNI…DEYLFYRFLQ (79 aa)) is the DEP domain.

As to quaternary structure, homodimer; via the transporter region and DEP domain. Interacts with the GATOR1 complex and prevents interaction between GATOR1 and KICSTOR; this interaction is disrupted upon cholesterol starvation.

Its subcellular location is the lysosome membrane. Its function is as follows. Cholesterol-binding protein that acts as a regulator of mTORC1 signaling pathway. Acts as a sensor of cholesterol to signal cholesterol sufficiency to mTORC1: in presence of cholesterol, binds cholesterol, leading to disruption of the interaction between the GATOR1 and KICSTOR complexes and promotion of mTORC1 signaling. Upon cholesterol starvation, GPR155/LYCHOS is unable to perturb the association between GATOR1 and KICSTOR, leading to mTORC1 signaling inhibition. Binds indole-3-acetic acid and may play a role in tryptophan metabolism. This Homo sapiens (Human) protein is Lysosomal cholesterol signaling protein.